Reading from the N-terminus, the 124-residue chain is uncharacterized protein (124 aa).

It belongs to the YciI family.

This is an uncharacterized protein from Rhizobium meliloti (strain 1021) (Ensifer meliloti).